Here is a 2144-residue protein sequence, read N- to C-terminus: MTDPGCPERRTLCFLSTLLSQKVPEKSDVVLRCMIAGQPKPEVTWYKNGQAIDLGGTVSSYEFFENQYIHLLHLSCCTQSDAAVYQVSARNCVGMICCSASLEVQCLQDPQVSPDPGGGRDAAGECKTEIREEDSINHTDEKWNPCKKGESTADSFLDKFNHLSSPQIVARGDSGASNSENPQYIKETRQRMGQYNSNNMQENSFNSNNTAEKQDVSQLWTVNATVPGLVSDGLGYEESNESVSPSHQTPKVQKYISFSLPLPETTLGPYPEDSNSINMQPGPQVSSEDSDSDYELCPEITLTYTEEFSDDDLEYLECSDVMTDYSNAVWQRSLQGTDRVFLLESDDEEMEFNECGLGGCEHFFTEMGCGPQVSGGMWSMNVATGFCSYHSQPQEVRVRSSGTSGHSPLPLHSEMTLTLGPHQDETAKMTEPGRAPLPTAPEAVENDCSGIRGETRDNPEAGEEFSGDNLQTMDKVETEASVKPLSGGSDKTEVKQGLESLARERTDEKYPGSKKAALRPTRARRPGMKANTKKQLLRDSAPKGTLDLLPKEPTRQPLPGSYGQEPTHTEAGAPGWDSHFHAEVCIPLPAEQDSKILRPPADPLSKEEDSSFEGGGALLNKLFEASQIPDRTDHLQMQIQETIGESSSLDQMLAFSVPAEESSTFAGATTHSVSNLSEINRENLSLAQYPGLESCPQSLQQEGRPNRDRDLPGALWAESACELSLLEDNEEEESQPPASVALPQGDGVPCREPEGLSDSFPQPTAPSLPLENVGSGSRVREAAGGVGCFEAGDQETCYATMDLLVGAPVDKYLPQEICPEDLELTEGQSEVCDLCSPDKILAVLQTQGSEPPRSTDKRSQDGKSAEGLLFNSTFTWDTAKEASEDAVGETAADVENPPSTFSSTLPYSERGFGETQPLCSETISFVKDSEGSYRSSSLSIPAAIDTLASYSSDRECSKEQSAESTANVDCHQVTREMEGISTNAAEVHEIKCHSVSVPQDNDFDVGADQVSCEARDEDNSQSLPDDDSQSGRSLSSSTGEATGETLVPAPSSAGDHGHFSMPEGQGLCSRALQMDNQPVCQSQAMEGAHSRGLEEHFQEKGSGMKHGIRPQSTSHQVSLSANDFQEILPSIPTMQQETNVEPLEHSLADSREEIECSSDPRTSDLVVAEKTVGEDSHLVVSVPALPDILLGEKDDVGLGSWAVGGKVKIITLEAPVFEIWPPELVRHPGYKEAEAGLTMPGRSWALSDILRAGATRSEPGALGGAAWVPSPQADALMALGANRDTWLGAAPDRQANCNCLSSQCLSQPRFLESSVDPVEDKELEVTDSPSEVSKTGEMEMPETLNEEQEETQQILRHPAVVNQSVNFPRILESSVDPIDDRGELEGVWPEKPEPSDSSVEGNEFIVGNTCQRVDIQPASLQLPHPQDSGEIIPYEHTTNQNRVDGERAEAKTSLPDKAKAEAEAVVWQAQGPGEEGQGIPSVCSMSQTQDGGDRSLGEAGQRGTDETEVISPLSPLSSCLTGVTHTCVKAETNNSTGHIYGGSEPRTRQSVIPMKTEKGTIESKCGNHVRSSDDLTNTPCTSSPKGNVTRLSISHGLEELKSEKLQIAETKPLNSSDSPTMTLALISGECESEKDPKSLLRRDPCPKGSTLDSGKKSRDQQQKPVAAQVSKAPGDQSAMAGSEEGKKKQEASGSGHLTAGIKKKILSRVAALRLRLEEKENSRKNSIVKKTPKFERSLSRTDEKRDPKRAPCKAEGKAPVLLKRIQAEMAPEHSGNIKLSCQFSEIHEDSTVCWTKDSKSIAQAKKSAGDNSSVSLAIVQAGQKDQGLYYCCLKNSYGKVTAEFNLTAEVLKQLSSHTEYRGCEEIEFSQLIFKEDVFNDSYFGDHLRGQISTEELHFGEGVHRKAFRSKVMQGLMPVFQPGHACVLKVHNAVAHGTRNNDELVQRNYKLAAQECYVQNTARYYAKIYAAEAQPLEGFGEVPEIIPIFLIHRPENNIPYATVEEELIGEFVKYSIRDGKEINFLRRDSEAGQKCCTFQHWVYQKTSGCLLVTDMQGVGMKLTDVGIATLARGYKGFKGNCSMTFIDQFRALHQCNKYCKMLGLKSLQNNSQKPKKPIVGKGRVPTNATQVKTPESETPPAERKT.

One can recognise an Ig-like 1 domain in the interval 7–105 (PERRTLCFLS…ICCSASLEVQ (99 aa)). A disulfide bridge connects residues cysteine 33 and cysteine 98. Disordered regions lie at residues 425–473 (ETAK…LQTM), 500–575 (SLAR…GAPG), 727–775 (EDNE…NVGS), 845–864 (QTQG…DGKS), 881–907 (EASE…TLPY), 1011–1065 (SCEA…PEGQ), 1316–1340 (DPVE…EMEM), 1471–1509 (GPGE…ETEV), 1565–1587 (CGNH…PKGN), 1629–1696 (ECES…GSGH), and 1720–1754 (ENSR…PCKA). Residues 500–511 (SLARERTDEKYP) are compositionally biased toward basic and acidic residues. The span at 853-864 (RSTDKRSQDGKS) shows a compositional bias: basic and acidic residues. Positions 897–906 (PPSTFSSTLP) are enriched in polar residues. Polar residues predominate over residues 1574–1587 (DLTNTPCTSSPKGN). 2 stretches are compositionally biased toward basic and acidic residues: residues 1631–1645 (ESEK…RDPC) and 1732–1754 (PKFE…PCKA). An Ig-like 2 domain is found at 1759–1847 (PVLLKRIQAE…GKVTAEFNLT (89 aa)). A disulfide bond links cysteine 1781 and cysteine 1831. In terms of domain architecture, Alpha-type protein kinase spans 1874-2106 (KEDVFNDSYF…YCKMLGLKSL (233 aa)). The disordered stretch occupies residues 2109-2144 (NSQKPKKPIVGKGRVPTNATQVKTPESETPPAERKT).

Belongs to the protein kinase superfamily. Alpha-type protein kinase family. ALPK subfamily.

The protein localises to the basolateral cell membrane. It catalyses the reaction L-seryl-[protein] + ATP = O-phospho-L-seryl-[protein] + ADP + H(+). The enzyme catalyses L-threonyl-[protein] + ATP = O-phospho-L-threonyl-[protein] + ADP + H(+). Functionally, protein kinase that recognizes phosphorylation sites in which the surrounding peptides have an alpha-helical conformation. Regulates cardiac development and cardiomyocyte differentiation by negatively regulating Wnt/beta-catenin signaling. This Mus musculus (Mouse) protein is Alpha-protein kinase 2.